The primary structure comprises 272 residues: Arylesterase (272 aa).

An AB hydrolase-1 domain is found at 21–253 (KPVLFSHGWL…LKVYKDAPHG (233 aa)). Acetate is bound at residue W29. S95 is an active-site residue. M96 lines the acetate pocket. Active-site residues include D223 and H252.

Belongs to the AB hydrolase superfamily. Bacterial non-heme haloperoxidase / perhydrolase family. As to quaternary structure, dimer of trimers.

The catalysed reaction is a phenyl acetate + H2O = a phenol + acetate + H(+). The enzyme catalyses peracetic acid + H2O = acetate + H2O2 + H(+). It catalyses the reaction a percarboxylic acid + H2O = a carboxylate + H2O2 + H(+). Functionally, hydrolyzes phenolic esters, such as phenyl acetate, nitrophenyl acetate and naphtyl acetate. Can act on a wide range of esters, but reaction rate and enantioselectivity differ significantly depending on the substrate. Shows a preference for esters with small acyl groups. Also shows low perhydrolase activity, and catalyzes the reversible formation of peroxycarboxylic acids from carboxylic acids and hydrogen peroxide. In vitro, enzyme-generated peracetic acid oxidizes bromide ion to bromonium, which reacts with monochlorodimedone to form bromochlorodimedone. In Pseudomonas fluorescens, this protein is Arylesterase.